The sequence spans 286 residues: Bifunctional protein FolD (286 aa).

Residues glycine 166–serine 168 and isoleucine 232 each bind NADP(+).

Belongs to the tetrahydrofolate dehydrogenase/cyclohydrolase family. In terms of assembly, homodimer.

It catalyses the reaction (6R)-5,10-methylene-5,6,7,8-tetrahydrofolate + NADP(+) = (6R)-5,10-methenyltetrahydrofolate + NADPH. It carries out the reaction (6R)-5,10-methenyltetrahydrofolate + H2O = (6R)-10-formyltetrahydrofolate + H(+). It functions in the pathway one-carbon metabolism; tetrahydrofolate interconversion. Catalyzes the oxidation of 5,10-methylenetetrahydrofolate to 5,10-methenyltetrahydrofolate and then the hydrolysis of 5,10-methenyltetrahydrofolate to 10-formyltetrahydrofolate. This is Bifunctional protein FolD from Marinobacter nauticus (strain ATCC 700491 / DSM 11845 / VT8) (Marinobacter aquaeolei).